The chain runs to 369 residues: S-(hydroxymethyl)glutathione dehydrogenase (369 aa).

Zn(2+)-binding residues include C40, H62, C92, C95, C98, C106, and C169.

This sequence belongs to the zinc-containing alcohol dehydrogenase family. Class-III subfamily. Homodimer. Requires Zn(2+) as cofactor.

Its subcellular location is the cytoplasm. The enzyme catalyses S-(hydroxymethyl)glutathione + NADP(+) = S-formylglutathione + NADPH + H(+). It catalyses the reaction S-(hydroxymethyl)glutathione + NAD(+) = S-formylglutathione + NADH + H(+). It carries out the reaction a primary alcohol + NAD(+) = an aldehyde + NADH + H(+). The catalysed reaction is a secondary alcohol + NAD(+) = a ketone + NADH + H(+). The enzyme catalyses S-nitrosoglutathione + NADH + H(+) = S-(hydroxysulfenamide)glutathione + NAD(+). In terms of biological role, has high formaldehyde dehydrogenase activity in the presence of glutathione and catalyzes the oxidation of normal alcohols in a reaction that is not GSH-dependent. In addition, hemithiolacetals other than those formed from GSH, including omega-thiol fatty acids, also are substrates. Also acts as a S-nitroso-glutathione reductase by catalyzing the NADH-dependent reduction of S-nitrosoglutathione. This Escherichia coli (strain SMS-3-5 / SECEC) protein is S-(hydroxymethyl)glutathione dehydrogenase (frmA).